The chain runs to 1561 residues: Formin-E (1561 aa).

The segment covering 1–28 has biased composition (low complexity); that stretch reads MDNHSSSSNPSSLSSSSSSSSSSSSFLS. Disordered stretches follow at residues 1 to 63, 77 to 187, 211 to 279, and 305 to 365; these read MDNH…EEKP, EEEE…GKLS, PIIV…SSED, and ILRS…NLNY. A compositionally biased stretch (basic and acidic residues) spans 29–51; sequence DHVKKEEQNGLDTIKEEIENKIE. Residues 32–85 adopt a coiled-coil conformation; it reads KKEEQNGLDTIKEEIENKIENEEEEEKIEEKPIEKVEEEKIIVQKEEEEKIEEE. Acidic residues predominate over residues 80-89; it reads EKIEEEPIEK. Polar residues predominate over residues 103–120; it reads DNINTTVEAKTLETSTEP. A coiled-coil region spans residues 158–208; that stretch reads EQQEQQEKQKEETKPSIREEVKEKIKGKLSEIKEEIKDIKEEIKHVIREEV. The span at 162–187 shows a compositional bias: basic and acidic residues; it reads QQEKQKEETKPSIREEVKEKIKGKLS. Positions 220 to 229 are enriched in pro residues; the sequence is SPPPPPPPPS. Residues 230–258 are compositionally biased toward low complexity; the sequence is ITVQSSSPVSSQISSPVSSPVSSPKPSVT. The span at 305-320 shows a compositional bias: polar residues; sequence ILRSKSSPNPGANNPN. Low complexity predominate over residues 326-365; it reads NNSSSSSSSNNNSDNNNNSDNNSNNNNINNNNSSSNNLNY. The Phorbol-ester/DAG-type zinc-finger motif lies at 379-427; the sequence is YHDFKIHRGTSSCVYCGENTRLWSTSYKCFFCGVVCHKKCLDSMNTIPC. A compositionally biased stretch (low complexity) spans 465-534; it reads PSSITNSSSK…TSISSPPIAS (70 aa). Positions 465-549 are disordered; the sequence is PSSITNSSSK…PLLQQQQQQQ (85 aa). Positions 541-573 form a coiled coil; it reads LLQQQQQQQQQQQQQQQQQQQQQQQQQQISTTQ. One can recognise a GBD/FH3 domain in the interval 581 to 929; that stretch reads SEKPDDDMIN…QISLHKGGFE (349 aa). Positions 952–989 form a coiled coil; the sequence is LNRKLGELEKQNIDKAMKIQEQDINIKSLLDLLKQLKD. 3 disordered regions span residues 1009 to 1092, 1466 to 1508, and 1526 to 1561; these read MEPP…VPKP, EEKR…SDED, and RQAK…PNKN. Positions 1017-1033 are enriched in low complexity; that stretch reads SVKSPDDPNNAAPIVVA. Residues 1019–1081 form the FH1 domain; the sequence is KSPDDPNNAA…LGAKKPPAGV (63 aa). The span at 1034-1070 shows a compositional bias: pro residues; sequence PIPPPPPPISGAPPPPPPPPPPMKGGAGPPPPPPPPG. Positions 1071–1081 are enriched in low complexity; the sequence is KLGAKKPPAGV. One can recognise an FH2 domain in the interval 1086–1475; sequence PPKVPKPSHP…EEKRLQQKQQ (390 aa). The stretch at 1398 to 1491 forms a coiled coil; that stretch reads LATASTEVEK…RKLTTSNESA (94 aa). Positions 1466–1481 are enriched in basic and acidic residues; it reads EEKRLQQKQQRQERAV. Polar residues-rich tracts occupy residues 1484 to 1498 and 1536 to 1561; these read LTTS…PNHA and HQIA…PNKN. The region spanning 1488-1518 is the DAD domain; sequence NESASASPNHAKSTDDKSDEDDDIVNDLLMA.

It belongs to the formin homology family. Diaphanous subfamily. As to quaternary structure, interacts (via GBD/FH3 domain) with activated Rho-GTPases.

Formins play an important role in the nucleation of actin and the formation of linear actin filaments. The polypeptide is Formin-E (forE) (Dictyostelium discoideum (Social amoeba)).